A 178-amino-acid polypeptide reads, in one-letter code: Large ribosomal subunit protein uL6 (178 aa).

Belongs to the universal ribosomal protein uL6 family. Part of the 50S ribosomal subunit.

This protein binds to the 23S rRNA, and is important in its secondary structure. It is located near the subunit interface in the base of the L7/L12 stalk, and near the tRNA binding site of the peptidyltransferase center. The sequence is that of Large ribosomal subunit protein uL6 from Frankia alni (strain DSM 45986 / CECT 9034 / ACN14a).